A 424-amino-acid chain; its full sequence is Phosphomethylpyrimidine synthase 2 (424 aa).

Substrate contacts are provided by residues N65, M94, Y123, H162, 184-186, 225-228, and E264; these read SRG and DGLR. Residue H268 coordinates Zn(2+). Position 291 (Y291) interacts with substrate. A Zn(2+)-binding site is contributed by H332. Residues C408, C411, and C415 each contribute to the [4Fe-4S] cluster site.

This sequence belongs to the ThiC family. [4Fe-4S] cluster serves as cofactor.

The catalysed reaction is 5-amino-1-(5-phospho-beta-D-ribosyl)imidazole + S-adenosyl-L-methionine = 4-amino-2-methyl-5-(phosphooxymethyl)pyrimidine + CO + 5'-deoxyadenosine + formate + L-methionine + 3 H(+). It participates in cofactor biosynthesis; thiamine diphosphate biosynthesis. Functionally, catalyzes the synthesis of the hydroxymethylpyrimidine phosphate (HMP-P) moiety of thiamine from aminoimidazole ribotide (AIR) in a radical S-adenosyl-L-methionine (SAM)-dependent reaction. The polypeptide is Phosphomethylpyrimidine synthase 2 (Methanothermobacter thermautotrophicus (strain ATCC 29096 / DSM 1053 / JCM 10044 / NBRC 100330 / Delta H) (Methanobacterium thermoautotrophicum)).